The primary structure comprises 261 residues: Putative hydro-lyase SH0274 (261 aa).

It belongs to the D-glutamate cyclase family.

This chain is Putative hydro-lyase SH0274, found in Staphylococcus haemolyticus (strain JCSC1435).